The chain runs to 569 residues: Cysteine--tRNA ligase CPS1 homolog, chloroplastic/mitochondrial (569 aa).

A chloroplast and mitochondrion-targeting transit peptide spans 1–42 (MAAARRAAGLLPLLLSSPSRARLPHRQALALTPPLLRPHRLY). Cysteine 99 contacts Zn(2+). The 'HIGH' region signature appears at 101-111 (VTPYDDSHIGH). Zn(2+) is bound by residues cysteine 279, histidine 304, and glutamate 308. A 'KMSKS' region motif is present at residues 336–340 (KMSKS). Lysine 339 contributes to the ATP binding site.

It belongs to the class-I aminoacyl-tRNA synthetase family. The cofactor is Zn(2+).

It is found in the plastid. The protein localises to the chloroplast. Its subcellular location is the mitochondrion. The catalysed reaction is tRNA(Cys) + L-cysteine + ATP = L-cysteinyl-tRNA(Cys) + AMP + diphosphate. Nuclear genome-encoded factor required for normal assembly of chloroplast polysomes. This is Cysteine--tRNA ligase CPS1 homolog, chloroplastic/mitochondrial from Oryza sativa subsp. japonica (Rice).